The following is a 428-amino-acid chain: Glutamate-1-semialdehyde 2,1-aminomutase (428 aa).

An N6-(pyridoxal phosphate)lysine modification is found at Lys-267.

This sequence belongs to the class-III pyridoxal-phosphate-dependent aminotransferase family. HemL subfamily. Homodimer. It depends on pyridoxal 5'-phosphate as a cofactor.

The protein localises to the cytoplasm. The enzyme catalyses (S)-4-amino-5-oxopentanoate = 5-aminolevulinate. The protein operates within porphyrin-containing compound metabolism; protoporphyrin-IX biosynthesis; 5-aminolevulinate from L-glutamyl-tRNA(Glu): step 2/2. The chain is Glutamate-1-semialdehyde 2,1-aminomutase from Flavobacterium psychrophilum (strain ATCC 49511 / DSM 21280 / CIP 103535 / JIP02/86).